Reading from the N-terminus, the 285-residue chain is Thrombin-like enzyme TLBm (285 aa).

Residues 1-273 (VIGGDECNIN…HLDWSQSVIA (273 aa)) form the Peptidase S1 domain. 6 disulfides stabilise this stretch: cysteine 7–cysteine 181, cysteine 30–cysteine 46, cysteine 94–cysteine 284, cysteine 156–cysteine 234, cysteine 192–cysteine 209, and cysteine 224–cysteine 249. Active-site charge relay system residues include histidine 45 and aspartate 113. The Charge relay system role is filled by serine 228.

Belongs to the peptidase S1 family. Snake venom subfamily. Monomer. Post-translationally, homologous thrombin-like enzymes are N-glycosylated. This enzyme does not contain the consensus glycosylation sites, suggesting it is not glycosylated. In terms of tissue distribution, expressed by the venom gland.

Its subcellular location is the secreted. With respect to regulation, inhibited by PMSF, disodium-EDTA, S(Dm) and soybean trypsin inhibitor (SBTI). SBTI and S(Dm) (the anti-hemorrhagic protein) acts as a non-competitive inhibitors that decrease the enzymatic activity. In terms of biological role, thrombin-like enzyme that induces the formation of fibrin clot. Cleaves the Aalpha-chain of fibrinogen (FGA) with higher activity than the Bbeta-chain (FGB). Induces platelet aggregation in both platelet-rich plasma and in washed platelet preparations. This aggregation is strongly inhibited by preincubation of the enzyme with PMSF. This is Thrombin-like enzyme TLBm from Bothrops marajoensis (Marajo lancehead).